A 508-amino-acid chain; its full sequence is Photosystem II CP47 reaction center protein (508 aa).

6 helical membrane passes run 21 to 36 (AVHIMHTALVSGWAGS), 101 to 115 (IVFSGLCFLAAIWHW), 140 to 156 (GIHLFLAGVACFGFGAF), 203 to 218 (IAAGTLGILAGLFHLS), 237 to 252 (VLSSSIAAVFFAAFVV), and 457 to 472 (TFALLFFFGHIWHGAR).

This sequence belongs to the PsbB/PsbC family. PsbB subfamily. PSII is composed of 1 copy each of membrane proteins PsbA, PsbB, PsbC, PsbD, PsbE, PsbF, PsbH, PsbI, PsbJ, PsbK, PsbL, PsbM, PsbT, PsbX, PsbY, PsbZ, Psb30/Ycf12, at least 3 peripheral proteins of the oxygen-evolving complex and a large number of cofactors. It forms dimeric complexes. The cofactor is Binds multiple chlorophylls. PSII binds additional chlorophylls, carotenoids and specific lipids..

The protein localises to the plastid. The protein resides in the chloroplast thylakoid membrane. In terms of biological role, one of the components of the core complex of photosystem II (PSII). It binds chlorophyll and helps catalyze the primary light-induced photochemical processes of PSII. PSII is a light-driven water:plastoquinone oxidoreductase, using light energy to abstract electrons from H(2)O, generating O(2) and a proton gradient subsequently used for ATP formation. The protein is Photosystem II CP47 reaction center protein of Hordeum vulgare (Barley).